We begin with the raw amino-acid sequence, 185 residues long: Transcription factor E (185 aa).

Residues 5 to 88 form the HTH TFE/IIEalpha-type domain; sequence KNKELLEIAQ…YWRLETKKLP (84 aa).

This sequence belongs to the TFE family. Monomer. Interaction with RNA polymerase subunits RpoF and RpoE is necessary for Tfe stimulatory transcription activity. Able to interact with Tbp and RNA polymerase in the absence of DNA promoter. Interacts both with the preinitiation and elongation complexes.

In terms of biological role, transcription factor that plays a role in the activation of archaeal genes transcribed by RNA polymerase. Facilitates transcription initiation by enhancing TATA-box recognition by TATA-box-binding protein (Tbp), and transcription factor B (Tfb) and RNA polymerase recruitment. Not absolutely required for transcription in vitro, but particularly important in cases where Tbp or Tfb function is not optimal. It dynamically alters the nucleic acid-binding properties of RNA polymerases by stabilizing the initiation complex and destabilizing elongation complexes. Seems to translocate with the RNA polymerase following initiation and acts by binding to the non template strand of the transcription bubble in elongation complexes. In Thermococcus kodakarensis (strain ATCC BAA-918 / JCM 12380 / KOD1) (Pyrococcus kodakaraensis (strain KOD1)), this protein is Transcription factor E.